The following is a 119-amino-acid chain: Large ribosomal subunit protein uL18 (119 aa).

The interval 1–23 (MISKPDKNKTRQRRHARVRGKIS) is disordered. Over residues 10–20 (TRQRRHARVRG) the composition is skewed to basic residues.

The protein belongs to the universal ribosomal protein uL18 family. As to quaternary structure, part of the 50S ribosomal subunit; part of the 5S rRNA/L5/L18/L25 subcomplex. Contacts the 5S and 23S rRNAs.

Its function is as follows. This is one of the proteins that bind and probably mediate the attachment of the 5S RNA into the large ribosomal subunit, where it forms part of the central protuberance. This Lacticaseibacillus casei (strain BL23) (Lactobacillus casei) protein is Large ribosomal subunit protein uL18.